Consider the following 370-residue polypeptide: Histidinol-phosphate aminotransferase (370 aa).

K220 bears the N6-(pyridoxal phosphate)lysine mark.

This sequence belongs to the class-II pyridoxal-phosphate-dependent aminotransferase family. Histidinol-phosphate aminotransferase subfamily. In terms of assembly, homodimer. Pyridoxal 5'-phosphate is required as a cofactor.

The enzyme catalyses L-histidinol phosphate + 2-oxoglutarate = 3-(imidazol-4-yl)-2-oxopropyl phosphate + L-glutamate. Its pathway is amino-acid biosynthesis; L-histidine biosynthesis; L-histidine from 5-phospho-alpha-D-ribose 1-diphosphate: step 7/9. The polypeptide is Histidinol-phosphate aminotransferase (Granulibacter bethesdensis (strain ATCC BAA-1260 / CGDNIH1)).